We begin with the raw amino-acid sequence, 831 residues long: Probable glucan 1,3-beta-glucosidase D (831 aa).

Basic and acidic residues-rich tracts occupy residues 1 to 24, 44 to 56, 79 to 93, 102 to 115, 137 to 151, and 198 to 213; these read MPSH…YREV, RRDD…RSHE, RSHD…RSRA, SRRD…EYRR, RDGQ…DREA, and QRER…LESK. 2 disordered regions span residues 1 to 179 and 192 to 241; these read MPSH…SGSH and HYDE…GQSK. The Cytoplasmic portion of the chain corresponds to 1 to 297; that stretch reads MPSHSRSRDR…AQPPFWKRKK (297 aa). The chain crosses the membrane as a helical; Signal-anchor for type II membrane protein span at residues 298–318; it reads WWIVIGVLVVVLAIVIPVAVV. The Extracellular portion of the chain corresponds to 319-831; it reads MSKKHGHDDD…PSFGDLPEYY (513 aa). 7 N-linked (GlcNAc...) asparagine glycosylation sites follow: Asn376, Asn381, Asn393, Asn410, Asn442, Asn546, and Asn558. Glu597 functions as the Proton donor in the catalytic mechanism. N-linked (GlcNAc...) asparagine glycans are attached at residues Asn610, Asn636, Asn669, and Asn689. Residue Glu702 is the Nucleophile of the active site.

The protein belongs to the glycosyl hydrolase 5 (cellulase A) family.

It is found in the cell membrane. The enzyme catalyses Successive hydrolysis of beta-D-glucose units from the non-reducing ends of (1-&gt;3)-beta-D-glucans, releasing alpha-glucose.. Functionally, glucosidase involved in the degradation of cellulosic biomass. Active on lichenan. The sequence is that of Probable glucan 1,3-beta-glucosidase D (exgD) from Aspergillus flavus (strain ATCC 200026 / FGSC A1120 / IAM 13836 / NRRL 3357 / JCM 12722 / SRRC 167).